Consider the following 526-residue polypeptide: MTENVNSSGDSAIKSEDKEEVTVIQEGQAKVGFHGPVFYNPVQEFNRDLTVTVLRQFSADHQKWAEEQKQLKTEEEPPKKKNKLAINEDGKIRILDALSASGLRALRFSKEVPNVGFIMANDFSDNAVASIQENVKLNGVEDIVEAHFGDAVMTMMEHRGIDKRFHAVDLDPYGTASTFLDSAVQCVADRGILMVTCTDMAVLCGNTPEACYNKYDAVTTRMKCCHEVGLRILLRAIDSAANRYTRYIEPLVSISVDFYVRVFVRVHTGAFQAKQSGTKVGTVLVCSGCHSMEPLVLLKRGEGNQQSKYSIPTVRHSISGPGNRCIHCLLPLHQIGPIYLAPIHSKPFVTSLLERLKSTPEAERLGTHGRLQGVLTMVNEELDDVLYYEHNQMANVVKVSVPKSQSVRSAILNAGFKVSGSHCNPRAIKTNAPMHLLWDIYRQVAKDTSVDREKRLAKESAGYHILGQPITNTVNFTLHPGAIEQAKKENLVRFQCNKGKNWGPRQKAKGSVNSTKAGFQLTEHKE.

Over residues 1 to 10 (MTENVNSSGD) the composition is skewed to polar residues. The interval 1–20 (MTENVNSSGDSAIKSEDKEE) is disordered. Residues 22 to 441 (TVIQEGQAKV…APMHLLWDIY (420 aa)) form the Trm1 methyltransferase domain. R47, R104, and D122 together coordinate S-adenosyl-L-methionine. 4 residues coordinate Zn(2+): C286, C289, C325, and C328. Residues 498–526 (KGKNWGPRQKAKGSVNSTKAGFQLTEHKE) are disordered.

Belongs to the class I-like SAM-binding methyltransferase superfamily. Trm1 family.

It catalyses the reaction guanosine(26) in tRNA + 2 S-adenosyl-L-methionine = N(2)-dimethylguanosine(26) in tRNA + 2 S-adenosyl-L-homocysteine + 2 H(+). In terms of biological role, dimethylates a single guanine residue at position 26 of most tRNAs using S-adenosyl-L-methionine as donor of the methyl groups. The polypeptide is tRNA (guanine(26)-N(2))-dimethyltransferase (trm-1) (Caenorhabditis elegans).